The primary structure comprises 263 residues: Proline rich transmembrane protein 1B (263 aa).

A compositionally biased stretch (gly residues) spans M1–S17. The segment at M1 to Y107 is disordered. Composition is skewed to low complexity over residues Q37–L47 and D75–P86. A run of 2 helical transmembrane segments spans residues M190–V210 and V238–V258.

Belongs to the CD225/Dispanin family.

It is found in the membrane. The protein is Proline rich transmembrane protein 1B of Homo sapiens (Human).